The chain runs to 996 residues: UPF0182 protein CE0802 (996 aa).

7 helical membrane passes run 19–39, 63–83, 115–135, 176–196, 212–234, 262–282, and 290–310; these read VTWI…TVGF, IILF…AGYF, ILII…QRSW, STLL…LGGI, GARA…TYWL, KIIL…AIFL, and LAVV…PLML. The interval 920–950 is disordered; it reads VPDVNATEDADATTDGEDETPAAPAAPAGSE. Over residues 925 to 939 the composition is skewed to acidic residues; the sequence is ATEDADATTDGEDET. Low complexity predominate over residues 940–950; it reads PAAPAAPAGSE.

The protein belongs to the UPF0182 family.

The protein localises to the cell membrane. This is UPF0182 protein CE0802 from Corynebacterium efficiens (strain DSM 44549 / YS-314 / AJ 12310 / JCM 11189 / NBRC 100395).